We begin with the raw amino-acid sequence, 194 residues long: Phosphoheptose isomerase (194 aa).

An SIS domain is found at 37-194 (ISNSFKQGGK…LIEFEMAKQA (158 aa)). Position 52-54 (52-54 (NGG)) interacts with substrate. Positions 61 and 65 each coordinate Zn(2+). Substrate contacts are provided by residues E65, 93–94 (ND), 119–121 (STS), S124, and Q172. Q172 and H180 together coordinate Zn(2+).

This sequence belongs to the SIS family. GmhA subfamily. Homotetramer. Zn(2+) is required as a cofactor.

The protein localises to the cytoplasm. The catalysed reaction is 2 D-sedoheptulose 7-phosphate = D-glycero-alpha-D-manno-heptose 7-phosphate + D-glycero-beta-D-manno-heptose 7-phosphate. It participates in carbohydrate biosynthesis; D-glycero-D-manno-heptose 7-phosphate biosynthesis; D-glycero-alpha-D-manno-heptose 7-phosphate and D-glycero-beta-D-manno-heptose 7-phosphate from sedoheptulose 7-phosphate: step 1/1. Its function is as follows. Catalyzes the isomerization of sedoheptulose 7-phosphate in D-glycero-D-manno-heptose 7-phosphate. In Haemophilus influenzae (strain PittGG), this protein is Phosphoheptose isomerase.